Here is a 171-residue protein sequence, read N- to C-terminus: Interleukin-26 (171 aa).

Positions 1 to 21 (MLVNFILRCGLLLVTLSLAIA) are cleaved as a signal peptide.

Belongs to the IL-10 family. In terms of assembly, homodimer. In terms of tissue distribution, expressed in HVS transformed T-cells but not other T-cell lines or primary stimulated T-cells. Expressed in colonic T-cells including Th17 inflammatory T-cells; the expression is significantly increased in serum of patients with Crohn's disease (at protein level).

It localises to the secreted. Its function is as follows. May play a role in local mechanisms of mucosal immunity and seems to have a pro-inflammatory function. May play a role in inflammatory bowel disease. Activates STAT1 and STAT3, MAPK1/3 (ERK1/2), JUN and AKT. Induces expression of SOCS3, TNF-alpha and IL-8, secretion of IL-8 and IL-10 and surface expression of ICAM1. Decreases proliferation of intestinal epithelial cells. Is inhibited by heparin. This Homo sapiens (Human) protein is Interleukin-26 (IL26).